The following is a 316-amino-acid chain: tRNA-splicing endonuclease subunit Sen34 (316 aa).

A disordered region spans residues 120–184; that stretch reads QAAKKQKLEQ…PGPSNGVTPL (65 aa). Composition is skewed to polar residues over residues 144-159 and 168-181; these read EATQ…QPSA and LDSS…SNGV. Catalysis depends on residues tyrosine 253, histidine 261, and lysine 292.

The protein belongs to the tRNA-intron endonuclease family. In terms of assembly, tRNA splicing endonuclease is a heterotetramer composed of TSEN2, TSEN15, TSEN34/LENG5 and TSEN54. tRNA splicing endonuclease complex also contains proteins of the pre-mRNA 3'-end processing machinery such as CLP1, CPSF1, CPSF4 and CSTF2.

Its subcellular location is the nucleus. The protein resides in the nucleolus. It catalyses the reaction pretRNA = a 3'-half-tRNA molecule with a 5'-OH end + a 5'-half-tRNA molecule with a 2',3'-cyclic phosphate end + an intron with a 2',3'-cyclic phosphate and a 5'-hydroxyl terminus.. Constitutes one of the two catalytic subunit of the tRNA-splicing endonuclease complex, a complex responsible for identification and cleavage of the splice sites in pre-tRNA. It cleaves pre-tRNA at the 5'- and 3'-splice sites to release the intron. The products are an intron and two tRNA half-molecules bearing 2',3'-cyclic phosphate and 5'-OH termini. There are no conserved sequences at the splice sites, but the intron is invariably located at the same site in the gene, placing the splice sites an invariant distance from the constant structural features of the tRNA body. The tRNA splicing endonuclease is also involved in mRNA processing via its association with pre-mRNA 3'-end processing factors, establishing a link between pre-tRNA splicing and pre-mRNA 3'-end formation, suggesting that the endonuclease subunits function in multiple RNA-processing events. In Mus musculus (Mouse), this protein is tRNA-splicing endonuclease subunit Sen34 (Tsen34).